The primary structure comprises 73 residues: Large ribosomal subunit protein bL31 (73 aa).

It belongs to the bacterial ribosomal protein bL31 family. Type A subfamily. In terms of assembly, part of the 50S ribosomal subunit. Contacts protein L9.

Functionally, binds the 23S rRNA and interacts with the tRNA in the E site. This Deinococcus radiodurans (strain ATCC 13939 / DSM 20539 / JCM 16871 / CCUG 27074 / LMG 4051 / NBRC 15346 / NCIMB 9279 / VKM B-1422 / R1) protein is Large ribosomal subunit protein bL31 (rpmE).